The sequence spans 113 residues: Endoribonuclease SymE (113 aa).

The SpoVT-AbrB domain occupies 29–74 (SRYPDYSRIPAITLKGQWLEAAGFATGTAVVVKVMEGCIVLTAQPA).

The protein belongs to the SymE family.

Its subcellular location is the cytoplasm. In terms of biological role, involved in the degradation and recycling of damaged RNA. It is itself a target for degradation by the ATP-dependent protease Lon. The chain is Endoribonuclease SymE from Escherichia coli (strain ATCC 8739 / DSM 1576 / NBRC 3972 / NCIMB 8545 / WDCM 00012 / Crooks).